A 227-amino-acid polypeptide reads, in one-letter code: Translation initiation factor 6 (227 aa).

The protein belongs to the eIF-6 family.

In terms of biological role, binds to the 50S ribosomal subunit and prevents its association with the 30S ribosomal subunit to form the 70S initiation complex. In Methanococcus vannielii (strain ATCC 35089 / DSM 1224 / JCM 13029 / OCM 148 / SB), this protein is Translation initiation factor 6.